Consider the following 215-residue polypeptide: Riboflavin synthase (215 aa).

Lumazine-binding repeat units follow at residues 1 to 96 (MFTG…FGGH) and 97 to 193 (FVSG…YRFL). 2,4-dihydroxypteridine-binding positions include 4-6 (GIV), 47-49 (CLT), 61-66 (DVMPET), 100-102 (GHV), Lys-135, 144-146 (SST), and 158-163 (SVIPHT).

In terms of assembly, homotrimer.

It carries out the reaction 2 6,7-dimethyl-8-(1-D-ribityl)lumazine + H(+) = 5-amino-6-(D-ribitylamino)uracil + riboflavin. It participates in cofactor biosynthesis; riboflavin biosynthesis; riboflavin from 2-hydroxy-3-oxobutyl phosphate and 5-amino-6-(D-ribitylamino)uracil: step 2/2. Catalyzes the dismutation of two molecules of 6,7-dimethyl-8-ribityllumazine, resulting in the formation of riboflavin and 5-amino-6-(D-ribitylamino)uracil. In Bacillus amyloliquefaciens (Bacillus velezensis), this protein is Riboflavin synthase (ribE).